Reading from the N-terminus, the 339-residue chain is UDP-N-acetylenolpyruvoylglucosamine reductase (339 aa).

One can recognise an FAD-binding PCMH-type domain in the interval 16–188; that stretch reads GIAATARYYS…LQVTLRLNKQ (173 aa). Arg-164 is an active-site residue. Residue Ser-238 is the Proton donor of the active site. Glu-334 is a catalytic residue.

This sequence belongs to the MurB family. The cofactor is FAD.

The protein localises to the cytoplasm. It catalyses the reaction UDP-N-acetyl-alpha-D-muramate + NADP(+) = UDP-N-acetyl-3-O-(1-carboxyvinyl)-alpha-D-glucosamine + NADPH + H(+). Its pathway is cell wall biogenesis; peptidoglycan biosynthesis. Its function is as follows. Cell wall formation. This Amoebophilus asiaticus (strain 5a2) protein is UDP-N-acetylenolpyruvoylglucosamine reductase.